We begin with the raw amino-acid sequence, 2298 residues long: Protein Ycf2 (2298 aa).

1638–1645 is a binding site for ATP; that stretch reads GSIGTGRS.

It belongs to the Ycf2 family.

It localises to the plastid. Its subcellular location is the chloroplast stroma. In terms of biological role, probable ATPase of unknown function. Its presence in a non-photosynthetic plant (Epifagus virginiana) and experiments in tobacco indicate that it has an essential function which is probably not related to photosynthesis. The chain is Protein Ycf2 from Gossypium barbadense (Sea Island cotton).